The chain runs to 152 residues: Deoxyuridine 5'-triphosphate nucleotidohydrolase (152 aa).

Substrate contacts are provided by residues Arg71 to Gly73, Asn84, Leu88 to Asp90, and Met98.

This sequence belongs to the dUTPase family. Mg(2+) serves as cofactor.

The catalysed reaction is dUTP + H2O = dUMP + diphosphate + H(+). Its pathway is pyrimidine metabolism; dUMP biosynthesis; dUMP from dCTP (dUTP route): step 2/2. Functionally, this enzyme is involved in nucleotide metabolism: it produces dUMP, the immediate precursor of thymidine nucleotides and it decreases the intracellular concentration of dUTP so that uracil cannot be incorporated into DNA. In Shewanella loihica (strain ATCC BAA-1088 / PV-4), this protein is Deoxyuridine 5'-triphosphate nucleotidohydrolase.